The sequence spans 204 residues: Probable chorismate pyruvate-lyase (204 aa).

Substrate-binding residues include Arg-78, Leu-131, and Glu-190.

Belongs to the UbiC family.

Its subcellular location is the cytoplasm. It carries out the reaction chorismate = 4-hydroxybenzoate + pyruvate. Its pathway is cofactor biosynthesis; ubiquinone biosynthesis. Its function is as follows. Removes the pyruvyl group from chorismate, with concomitant aromatization of the ring, to provide 4-hydroxybenzoate (4HB) for the ubiquinone pathway. The sequence is that of Probable chorismate pyruvate-lyase from Shewanella frigidimarina (strain NCIMB 400).